The chain runs to 57 residues: Small ribosomal subunit protein bS21 (57 aa).

This sequence belongs to the bacterial ribosomal protein bS21 family.

The protein is Small ribosomal subunit protein bS21 of Bacillus cytotoxicus (strain DSM 22905 / CIP 110041 / 391-98 / NVH 391-98).